The chain runs to 878 residues: DNA mismatch repair protein MutS (878 aa).

626 to 633 is an ATP binding site; that stretch reads GPNMAGKS.

The protein belongs to the DNA mismatch repair MutS family.

Functionally, this protein is involved in the repair of mismatches in DNA. It is possible that it carries out the mismatch recognition step. This protein has a weak ATPase activity. In Paracoccus denitrificans (strain Pd 1222), this protein is DNA mismatch repair protein MutS.